The chain runs to 419 residues: Tyrosine--tRNA ligase (419 aa).

An L-tyrosine-binding site is contributed by tyrosine 34. Residues 39–48 (PSGDSMHIGH) carry the 'HIGH' region motif. Positions 168 and 172 each coordinate L-tyrosine. Positions 230–234 (KFGKS) match the 'KMSKS' region motif. Residue lysine 233 participates in ATP binding. Residues 352–418 (ANLVDWLVTL…GKKKYFLVSY (67 aa)) form the S4 RNA-binding domain.

The protein belongs to the class-I aminoacyl-tRNA synthetase family. TyrS type 1 subfamily. As to quaternary structure, homodimer.

It localises to the cytoplasm. The enzyme catalyses tRNA(Tyr) + L-tyrosine + ATP = L-tyrosyl-tRNA(Tyr) + AMP + diphosphate + H(+). Functionally, catalyzes the attachment of tyrosine to tRNA(Tyr) in a two-step reaction: tyrosine is first activated by ATP to form Tyr-AMP and then transferred to the acceptor end of tRNA(Tyr). In Listeria monocytogenes serovar 1/2a (strain ATCC BAA-679 / EGD-e), this protein is Tyrosine--tRNA ligase.